A 507-amino-acid polypeptide reads, in one-letter code: ATP synthase subunit alpha, chloroplastic (507 aa).

170–177 contributes to the ATP binding site; the sequence is GDRQTGKT. T257 is subject to Phosphothreonine.

The protein belongs to the ATPase alpha/beta chains family. In terms of assembly, F-type ATPases have 2 components, CF(1) - the catalytic core - and CF(0) - the membrane proton channel. CF(1) has five subunits: alpha(3), beta(3), gamma(1), delta(1), epsilon(1). CF(0) has four main subunits: a, b, b' and c.

The protein resides in the plastid. Its subcellular location is the chloroplast thylakoid membrane. It carries out the reaction ATP + H2O + 4 H(+)(in) = ADP + phosphate + 5 H(+)(out). In terms of biological role, produces ATP from ADP in the presence of a proton gradient across the membrane. The alpha chain is a regulatory subunit. This chain is ATP synthase subunit alpha, chloroplastic, found in Capsella bursa-pastoris (Shepherd's purse).